Consider the following 307-residue polypeptide: Reaction center protein M chain (307 aa).

The next 3 membrane-spanning stretches (helical) occupy residues 52-78, 110-139, and 142-167; these read LGIA…WYQA, QGGV…ADQL, and GKHM…PILM. Histidine 181 and histidine 201 together coordinate (7R,8Z)-bacteriochlorophyll b. A helical membrane pass occupies residues 197 to 225; the sequence is YNPFHGLSIAALYGSALLFAMHGATILAV. 2 residues coordinate Fe cation: histidine 218 and glutamate 233. Residue tryptophan 251 coordinates a ubiquinone. Residues 259 to 285 traverse the membrane as a helical segment; sequence ATMEGIHRWAIWMAVMVTLTGGIGILL. Histidine 265 contacts Fe cation.

Belongs to the reaction center PufL/M/PsbA/D family. Reaction center is composed of four bacteriochlorophylls, two bacteriopheophytins, two ubiquinones, one iron, and three highly hydrophobic polypeptide chains (designated L, M, and H).

The protein localises to the cellular chromatophore membrane. Functionally, the reaction center is a membrane-bound complex that mediates the initial photochemical event in the electron transfer process of photosynthesis. The chain is Reaction center protein M chain (pufM) from Rhodobacter capsulatus (Rhodopseudomonas capsulata).